The following is a 945-amino-acid chain: Endo-1,4-beta-xylanase 1 (945 aa).

Residues 16–41 are compositionally biased toward basic and acidic residues; it reads NGDRNPDKKSRESMEVSRKDNEEPEK. The tract at residues 16 to 50 is disordered; that stretch reads NGDRNPDKKSRESMEVSRKDNEEPEKQNNNNVASI. CBM-cenC domains are found at residues 57–197, 227–362, and 397–541; these read NVIV…EGPS, IVVN…IEGP, and NILT…GPSS. Residues Asn86, Asn239, Asn305, Asn349, Asn417, Asn453, and Asn687 are each glycosylated (N-linked (GlcNAc...) asparagine). The GH10 domain maps to 589 to 884; the sequence is SGASVRVRQI…NEAGKRFLAV (296 aa). Glu718 serves as the catalytic Proton donor. Glu819 functions as the Nucleophile in the catalytic mechanism.

The protein belongs to the glycosyl hydrolase 10 (cellulase F) family. Predominantly expressed in vascular bundles, but not in vessel cells. Mostly expressed in stems, at lower levels in roots, and weakly in inflorescences and seedlings.

The protein resides in the secreted. It localises to the cell wall. The catalysed reaction is Endohydrolysis of (1-&gt;4)-beta-D-xylosidic linkages in xylans.. The protein operates within glycan degradation; xylan degradation. In terms of biological role, binds to and hydrolyzes insoluble and soluble xylan substrates. Exhibits xylanase activity. The chain is Endo-1,4-beta-xylanase 1 from Arabidopsis thaliana (Mouse-ear cress).